A 447-amino-acid polypeptide reads, in one-letter code: MKKEYFGTDGIRGRVGDYPITPDFMLKLGWAAGCVFAREMPGRRVLIGKDTRISGYMFESALEAGFSAAGVDTQLLGPMPTPAVAYLTRTLRAQAGVVISASHNPYYDNGIKFFGPDGMKLPDELELLIEDYLGRPMTTVECSHIGKATRIVDAAGRYIEFCKSTIPLGMHFSGMKIVVDCAHGSTYHVAPDVFSELRATVSTLGVAPDGLNINDRVGATDPENLRQTVLEENADLGIALDGDGDRLIMVDHRGEVVDGDELLFVIANARHAEGELKGSVVGTLMSNLGLEQAIRRLGLEFRRAAVGDRYVMEMMLEHGSMLGGEGSGHIICRDRTTTGDGIVSALQVLAEIVRSGKTLHELKQGMRKYPQRLVNVRLAERVSLASVPLVQKVKAEVEAELGDSGRVLLRPSGTEPLIRVMVEGADEGQVRELADRLAGAVARAFSA.

Ser-102 functions as the Phosphoserine intermediate in the catalytic mechanism. Mg(2+)-binding residues include Ser-102, Asp-241, Asp-243, and Asp-245. Ser-102 carries the phosphoserine modification.

It belongs to the phosphohexose mutase family. It depends on Mg(2+) as a cofactor. Post-translationally, activated by phosphorylation.

The enzyme catalyses alpha-D-glucosamine 1-phosphate = D-glucosamine 6-phosphate. In terms of biological role, catalyzes the conversion of glucosamine-6-phosphate to glucosamine-1-phosphate. The polypeptide is Phosphoglucosamine mutase (Methylococcus capsulatus (strain ATCC 33009 / NCIMB 11132 / Bath)).